We begin with the raw amino-acid sequence, 362 residues long: Peptide chain release factor 1 (362 aa).

Glutamine 237 carries the N5-methylglutamine modification.

It belongs to the prokaryotic/mitochondrial release factor family. In terms of processing, methylated by PrmC. Methylation increases the termination efficiency of RF1.

It localises to the cytoplasm. Functionally, peptide chain release factor 1 directs the termination of translation in response to the peptide chain termination codons UAG and UAA. The protein is Peptide chain release factor 1 of Legionella pneumophila (strain Paris).